A 56-amino-acid chain; its full sequence is Ovomucoid (56 aa).

Residues 6–56 enclose the Kazal-like domain; sequence VDCSEYPKPDCTLEYRPLCGSDNKTYASKCNFCNAVVESNGTLTLSHFGKC. 3 cysteine pairs are disulfide-bonded: Cys8-Cys38, Cys16-Cys35, and Cys24-Cys56. Residue Asn45 is glycosylated (N-linked (GlcNAc...) asparagine).

The protein localises to the secreted. This chain is Ovomucoid, found in Callipepla squamata pallida (Blue scaled quail).